Reading from the N-terminus, the 275-residue chain is Type III pantothenate kinase (275 aa).

Residue 9-16 coordinates ATP; it reads DIGNTRLK. Substrate contacts are provided by residues Tyr-114 and 121-124; that span reads GVDR. Catalysis depends on Asp-123, which acts as the Proton acceptor. Thr-147 provides a ligand contact to ATP. Thr-209 is a substrate binding site.

It belongs to the type III pantothenate kinase family. As to quaternary structure, homodimer. NH4(+) serves as cofactor. Requires K(+) as cofactor.

The protein resides in the cytoplasm. The catalysed reaction is (R)-pantothenate + ATP = (R)-4'-phosphopantothenate + ADP + H(+). It participates in cofactor biosynthesis; coenzyme A biosynthesis; CoA from (R)-pantothenate: step 1/5. In terms of biological role, catalyzes the phosphorylation of pantothenate (Pan), the first step in CoA biosynthesis. The sequence is that of Type III pantothenate kinase from Cupriavidus pinatubonensis (strain JMP 134 / LMG 1197) (Cupriavidus necator (strain JMP 134)).